The chain runs to 138 residues: MKPSPRRKARELAVQAVYSWQVSKNPVNDIEVNFIADNSKRRFDIEYFQLLLRGVTTNIGSIDEAIIPYVDRPLDDIDQVEKAILRVAVFELKDCTDVPYRVVINEAIELAKSFAADDSHKFVNGVLDKTVKLIRPQE.

Belongs to the NusB family.

Functionally, involved in transcription antitermination. Required for transcription of ribosomal RNA (rRNA) genes. Binds specifically to the boxA antiterminator sequence of the ribosomal RNA (rrn) operons. This chain is Transcription antitermination protein NusB, found in Colwellia psychrerythraea (strain 34H / ATCC BAA-681) (Vibrio psychroerythus).